The primary structure comprises 105 residues: Phosphoribosyl-ATP pyrophosphatase (105 aa).

This sequence belongs to the PRA-PH family.

It localises to the cytoplasm. The enzyme catalyses 1-(5-phospho-beta-D-ribosyl)-ATP + H2O = 1-(5-phospho-beta-D-ribosyl)-5'-AMP + diphosphate + H(+). It participates in amino-acid biosynthesis; L-histidine biosynthesis; L-histidine from 5-phospho-alpha-D-ribose 1-diphosphate: step 2/9. This Ruthia magnifica subsp. Calyptogena magnifica protein is Phosphoribosyl-ATP pyrophosphatase.